Reading from the N-terminus, the 459-residue chain is Interleukin-7 receptor subunit alpha (459 aa).

Residues 1–20 (MMALGRAFAIVFCLIQAVSG) form the signal peptide. The Extracellular portion of the chain corresponds to 21–239 (ESGNAQDGDL…PEPKNQGGWD (219 aa)). A disulfide bond links C42 and C57. N60 carries an N-linked (GlcNAc...) asparagine glycan. 2 cysteine pairs are disulfide-bonded: C74-C82 and C108-C118. 2 N-linked (GlcNAc...) asparagine glycosylation sites follow: N115 and N177. The region spanning 131-232 (APSDLKVVYR…PSSTFETPEP (102 aa)) is the Fibronectin type-III domain. Positions 218 to 222 (WSEWS) match the WSXWS motif motif. A helical transmembrane segment spans residues 240-264 (PVLPSVTILSLFSVFLLVILAHVLW). Over 265–459 (KKRIKPVVWP…VTMSSFYQNK (195 aa)) the chain is Cytoplasmic. Residues 272–280 (VWPSLPDHK) carry the Box 1 motif motif. Phosphothreonine; by PKC is present on T282. Disordered regions lie at residues 337–365 (TQGH…RRES) and 378–413 (NAPP…NTNV). A compositionally biased stretch (polar residues) spans 347–357 (ANRSPETSVSP). Residues 388 to 397 (PDYRDGDRNR) are compositionally biased toward basic and acidic residues.

Belongs to the type I cytokine receptor family. Type 4 subfamily. The IL7 receptor is a heterodimer of IL7R and IL2RG. The TSLP receptor is a heterodimer of CRLF2 and IL7R. Interacts with CD53. N-glycosylated IL-7Ralpha binds IL7 300-fold more tightly than the unglycosylated form. In terms of processing, ubiquitinated by MARCHF8; leading to lysosomal degradation. In terms of tissue distribution, spleen, thymus and fetal liver.

The protein localises to the membrane. Receptor for interleukin-7. Also acts as a receptor for thymic stromal lymphopoietin (TSLP). The polypeptide is Interleukin-7 receptor subunit alpha (Il7r) (Mus musculus (Mouse)).